Consider the following 469-residue polypeptide: Aspartyl/glutamyl-tRNA(Asn/Gln) amidotransferase subunit B (469 aa).

The protein belongs to the GatB/GatE family. GatB subfamily. Heterotrimer of A, B and C subunits.

The enzyme catalyses L-glutamyl-tRNA(Gln) + L-glutamine + ATP + H2O = L-glutaminyl-tRNA(Gln) + L-glutamate + ADP + phosphate + H(+). It catalyses the reaction L-aspartyl-tRNA(Asn) + L-glutamine + ATP + H2O = L-asparaginyl-tRNA(Asn) + L-glutamate + ADP + phosphate + 2 H(+). Allows the formation of correctly charged Asn-tRNA(Asn) or Gln-tRNA(Gln) through the transamidation of misacylated Asp-tRNA(Asn) or Glu-tRNA(Gln) in organisms which lack either or both of asparaginyl-tRNA or glutaminyl-tRNA synthetases. The reaction takes place in the presence of glutamine and ATP through an activated phospho-Asp-tRNA(Asn) or phospho-Glu-tRNA(Gln). The protein is Aspartyl/glutamyl-tRNA(Asn/Gln) amidotransferase subunit B of Methanococcus maripaludis (strain C6 / ATCC BAA-1332).